Here is a 139-residue protein sequence, read N- to C-terminus: uncharacterized protein (139 aa).

This is an uncharacterized protein from Ostreid herpesvirus 1 (isolate France) (OsHV-1).